A 570-amino-acid polypeptide reads, in one-letter code: ATP-dependent RNA helicase ROK1 (570 aa).

Basic and acidic residues predominate over residues 69 to 78; it reads ETHAEDKEDK. The interval 69 to 96 is disordered; that stretch reads ETHAEDKEDKDNDNEEDEIKEEESLQYQ. Residues 79–89 are compositionally biased toward acidic residues; that stretch reads DNDNEEDEIKE. The Q motif signature appears at 131–159; that stretch reads DLITRFSFDKRLLNNLILNHFTEPTPIQC. A Helicase ATP-binding domain is found at 162-342; it reads IPLALNNRDM…KSIMMDPVRV (181 aa). 175–182 contributes to the ATP binding site; the sequence is APTGSGKT. The DEAD box signature appears at 289–292; the sequence is DEAD. The 163-residue stretch at 353 to 515 folds into the Helicase C-terminal domain; sequence SIEQKLVFCG…EISEWMEKVS (163 aa).

It belongs to the DEAD box helicase family. DDX52/ROK1 subfamily. In terms of assembly, interacts with the U3 snoRNA and is associated with the 90S and 40S pre-ribosomes.

The protein localises to the nucleus. The protein resides in the nucleolus. The catalysed reaction is ATP + H2O = ADP + phosphate + H(+). ATP-dependent RNA helicase involved in 40S ribosomal subunit biogenesis. Required for the processing and cleavage of 35S pre-rRNA at sites A0, A1, and A2, leading to mature 18S rRNA. The sequence is that of ATP-dependent RNA helicase ROK1 (ROK1) from Vanderwaltozyma polyspora (strain ATCC 22028 / DSM 70294 / BCRC 21397 / CBS 2163 / NBRC 10782 / NRRL Y-8283 / UCD 57-17) (Kluyveromyces polysporus).